The primary structure comprises 438 residues: DEAD-box ATP-dependent RNA helicase 58, chloroplastic (438 aa).

Residues 1–44 constitute a chloroplast transit peptide; it reads MAAFSGCASPLSTTLRSGLAPFTLRHRLRLRRLRASAATLREVC. The short motif at 41–69 is the Q motif element; the sequence is REVCAGRVPEHVLQRAEEVGYVVPTEVQE. Residues 72-245 enclose the Helicase ATP-binding domain; that stretch reads LPVLLSGQDC…DCVQHKWTKT (174 aa). Position 85 to 92 (85 to 92) interacts with ATP; that stretch reads AQTGSGKT. The DEAD box signature appears at 190-193; the sequence is DEVD. The region spanning 274–436 is the Helicase C-terminal domain; sequence RLHVLLSLLE…ELPVESMFAF (163 aa).

It belongs to the DEAD box helicase family.

The protein resides in the plastid. Its subcellular location is the chloroplast. The catalysed reaction is ATP + H2O = ADP + phosphate + H(+). The polypeptide is DEAD-box ATP-dependent RNA helicase 58, chloroplastic (Oryza sativa subsp. japonica (Rice)).